The following is a 31-amino-acid chain: Cyclotide vico-A (31 aa).

Positions 1-31 (GSIPCAESCVYIPCFTGIAGCSCKNKVCYYN) form a cross-link, cyclopeptide (Gly-Asn). Disulfide bonds link cysteine 5-cysteine 21, cysteine 9-cysteine 23, and cysteine 14-cysteine 28.

This sequence belongs to the cyclotide family. Bracelet subfamily. Post-translationally, this is a cyclic peptide.

Probably participates in a plant defense mechanism. The polypeptide is Cyclotide vico-A (Viola cotyledon (Violeta)).